The primary structure comprises 275 residues: Large ribosomal subunit protein uL2 (275 aa).

The disordered stretch occupies residues 224–275 (VMNPVDHPHGGGEGKSPIGRPSPVTPWGKPTLGYKTRKKNKASDKFIIKRRK). Over residues 264–275 (KASDKFIIKRRK) the composition is skewed to basic and acidic residues.

This sequence belongs to the universal ribosomal protein uL2 family. Part of the 50S ribosomal subunit. Forms a bridge to the 30S subunit in the 70S ribosome.

In terms of biological role, one of the primary rRNA binding proteins. Required for association of the 30S and 50S subunits to form the 70S ribosome, for tRNA binding and peptide bond formation. It has been suggested to have peptidyltransferase activity; this is somewhat controversial. Makes several contacts with the 16S rRNA in the 70S ribosome. This chain is Large ribosomal subunit protein uL2, found in Acetivibrio thermocellus (strain ATCC 27405 / DSM 1237 / JCM 9322 / NBRC 103400 / NCIMB 10682 / NRRL B-4536 / VPI 7372) (Clostridium thermocellum).